Here is a 95-residue protein sequence, read N- to C-terminus: Probable FAD-linked sulfhydryl oxidase OPG072 (95 aa).

Over 1–8 the chain is Intravirion; sequence MNPKHWGR. The 95-residue stretch at 1–95 folds into the ERV/ALR sulfhydryl oxidase domain; that stretch reads MNPKHWGRAA…AIDVSKVKPL (95 aa). The helical transmembrane segment at 9-25 threads the bilayer; that stretch reads AAWTIIFIVLSQAGLDG. Residues 26-95 are Virion surface-facing; the sequence is NIEACKRKLY…AIDVSKVKPL (70 aa). The cysteines at positions 43 and 46 are disulfide-linked.

Belongs to the orthopoxvirus OPG072 family. Interacts with OPG128; this interaction involves formation of a transient disulfide-bonded intermediate, allowing disulfide bond transfer. Requires FAD as cofactor.

The protein resides in the virion membrane. The protein localises to the host cytoplasm. The catalysed reaction is 2 R'C(R)SH + O2 = R'C(R)S-S(R)CR' + H2O2. Functionally, FAD-dependent sulfhydryl oxidase that catalyzes disulfide bond formation. The complete pathway for formation of disulfide bonds in intracellular virion membrane proteins sequentially involves thiol-disulfide transfer between OPG072, OPG128 and OPG088. The sequence is that of Probable FAD-linked sulfhydryl oxidase OPG072 (OPG072) from Variola virus (isolate Human/India/Ind3/1967) (VARV).